Reading from the N-terminus, the 189-residue chain is Recombination protein RecR (189 aa).

Residues Cys48–Cys63 form a C4-type zinc finger. The 95-residue stretch at Gln71 to Pro165 folds into the Toprim domain.

Belongs to the RecR family.

Its function is as follows. May play a role in DNA repair. It seems to be involved in an RecBC-independent recombinational process of DNA repair. It may act with RecF and RecO. This is Recombination protein RecR from Prochlorococcus marinus (strain MIT 9313).